A 204-amino-acid chain; its full sequence is Urease accessory protein UreG (204 aa).

GTP is bound at residue 11-18 (GPVGAGKT).

This sequence belongs to the SIMIBI class G3E GTPase family. UreG subfamily. In terms of assembly, homodimer. UreD, UreF and UreG form a complex that acts as a GTP-hydrolysis-dependent molecular chaperone, activating the urease apoprotein by helping to assemble the nickel containing metallocenter of UreC. The UreE protein probably delivers the nickel.

The protein resides in the cytoplasm. Its function is as follows. Facilitates the functional incorporation of the urease nickel metallocenter. This process requires GTP hydrolysis, probably effectuated by UreG. This Staphylococcus aureus (strain bovine RF122 / ET3-1) protein is Urease accessory protein UreG.